Consider the following 678-residue polypeptide: UvrABC system protein B (678 aa).

One can recognise a Helicase ATP-binding domain in the interval 31–417 (ENLNDGLAHQ…KSGTEIIDQV (387 aa)). ATP is bound at residue 44–51 (GVTGSGKT). Residues 97 to 120 (YYDYYQPEAYVPSSDTFIEKDASI) carry the Beta-hairpin motif. Positions 436–602 (QVDDLLSEAR…GLNKKVGELL (167 aa)) constitute a Helicase C-terminal domain. Residues 603–625 (DIGQGGSNKSRNKPRSQKAAEPA) form a disordered region. The 36-residue stretch at 638–673 (QQQIKKLEQQMYKFAQDLEFEKAAAIRDQLHKLREQ) folds into the UVR domain.

It belongs to the UvrB family. In terms of assembly, forms a heterotetramer with UvrA during the search for lesions. Interacts with UvrC in an incision complex.

The protein resides in the cytoplasm. The UvrABC repair system catalyzes the recognition and processing of DNA lesions. A damage recognition complex composed of 2 UvrA and 2 UvrB subunits scans DNA for abnormalities. Upon binding of the UvrA(2)B(2) complex to a putative damaged site, the DNA wraps around one UvrB monomer. DNA wrap is dependent on ATP binding by UvrB and probably causes local melting of the DNA helix, facilitating insertion of UvrB beta-hairpin between the DNA strands. Then UvrB probes one DNA strand for the presence of a lesion. If a lesion is found the UvrA subunits dissociate and the UvrB-DNA preincision complex is formed. This complex is subsequently bound by UvrC and the second UvrB is released. If no lesion is found, the DNA wraps around the other UvrB subunit that will check the other stand for damage. This is UvrABC system protein B from Mannheimia succiniciproducens (strain KCTC 0769BP / MBEL55E).